The sequence spans 110 residues: Cell cycle protein GpsB (110 aa).

A coiled-coil region spans residues 32 to 73 (LDDVIKDYENYLEQIEKLQMENRRLQQALDKKESEASNVRNS).

The protein belongs to the GpsB family. Forms polymers through the coiled coil domains. Interacts with PBP1, MreC and EzrA.

The protein resides in the cytoplasm. Divisome component that associates with the complex late in its assembly, after the Z-ring is formed, and is dependent on DivIC and PBP2B for its recruitment to the divisome. Together with EzrA, is a key component of the system that regulates PBP1 localization during cell cycle progression. Its main role could be the removal of PBP1 from the cell pole after pole maturation is completed. Also contributes to the recruitment of PBP1 to the division complex. Not essential for septum formation. This chain is Cell cycle protein GpsB, found in Streptococcus agalactiae serotype Ia (strain ATCC 27591 / A909 / CDC SS700).